The sequence spans 281 residues: Shikimate dehydrogenase (NADP(+)) (281 aa).

Residues 14–16 (SRS) and Thr61 contribute to the shikimate site. Lys65 functions as the Proton acceptor in the catalytic mechanism. 2 residues coordinate shikimate: Asn86 and Asp101. NADP(+) contacts are provided by residues 127-131 (GAGGA), 151-156 (NRTLAR), and Val216. A shikimate-binding site is contributed by Tyr218. Residue Gly239 coordinates NADP(+).

It belongs to the shikimate dehydrogenase family. As to quaternary structure, homodimer.

The enzyme catalyses shikimate + NADP(+) = 3-dehydroshikimate + NADPH + H(+). It participates in metabolic intermediate biosynthesis; chorismate biosynthesis; chorismate from D-erythrose 4-phosphate and phosphoenolpyruvate: step 4/7. Involved in the biosynthesis of the chorismate, which leads to the biosynthesis of aromatic amino acids. Catalyzes the reversible NADPH linked reduction of 3-dehydroshikimate (DHSA) to yield shikimate (SA). This chain is Shikimate dehydrogenase (NADP(+)), found in Azorhizobium caulinodans (strain ATCC 43989 / DSM 5975 / JCM 20966 / LMG 6465 / NBRC 14845 / NCIMB 13405 / ORS 571).